We begin with the raw amino-acid sequence, 86 residues long: Sodium channel neurotoxin MeuNaTxalpha-4 (86 aa).

Residues 1–19 (MNYLILISFALLVITGVES) form the signal peptide. The region spanning 21-85 (RDAYIAKPHN…VPIRIPGKCH (65 aa)) is the LCN-type CS-alpha/beta domain. Disulfide bonds link C31-C84, C35-C57, C43-C67, and C47-C69. Position 86 (R86) is a propeptide, removed by a carboxypeptidase.

It belongs to the long (4 C-C) scorpion toxin superfamily. Sodium channel inhibitor family. Alpha subfamily. In terms of tissue distribution, expressed by the venom gland.

It localises to the secreted. Alpha toxins bind voltage-independently at site-3 of sodium channels (Nav) and inhibit the inactivation of the activated channels, thereby blocking neuronal transmission. This toxin inhibits inactivation of drosophila DmNav1 (EC(50)=130 nM). In Mesobuthus eupeus (Lesser Asian scorpion), this protein is Sodium channel neurotoxin MeuNaTxalpha-4.